Consider the following 222-residue polypeptide: N-(5'-phosphoribosyl)anthranilate isomerase (222 aa).

Belongs to the TrpF family.

It catalyses the reaction N-(5-phospho-beta-D-ribosyl)anthranilate = 1-(2-carboxyphenylamino)-1-deoxy-D-ribulose 5-phosphate. It participates in amino-acid biosynthesis; L-tryptophan biosynthesis; L-tryptophan from chorismate: step 3/5. The chain is N-(5'-phosphoribosyl)anthranilate isomerase from Gloeobacter violaceus (strain ATCC 29082 / PCC 7421).